The chain runs to 255 residues: tRNA (guanine-N(1)-)-methyltransferase (255 aa).

Residues Gly-113 and 133–138 (IGDYVL) each bind S-adenosyl-L-methionine.

It belongs to the RNA methyltransferase TrmD family. In terms of assembly, homodimer.

The protein resides in the cytoplasm. The enzyme catalyses guanosine(37) in tRNA + S-adenosyl-L-methionine = N(1)-methylguanosine(37) in tRNA + S-adenosyl-L-homocysteine + H(+). In terms of biological role, specifically methylates guanosine-37 in various tRNAs. The chain is tRNA (guanine-N(1)-)-methyltransferase from Chloroflexus aggregans (strain MD-66 / DSM 9485).